The following is a 421-amino-acid chain: Gamma-glutamyl phosphate reductase (421 aa).

The protein belongs to the gamma-glutamyl phosphate reductase family.

Its subcellular location is the cytoplasm. It carries out the reaction L-glutamate 5-semialdehyde + phosphate + NADP(+) = L-glutamyl 5-phosphate + NADPH + H(+). The protein operates within amino-acid biosynthesis; L-proline biosynthesis; L-glutamate 5-semialdehyde from L-glutamate: step 2/2. In terms of biological role, catalyzes the NADPH-dependent reduction of L-glutamate 5-phosphate into L-glutamate 5-semialdehyde and phosphate. The product spontaneously undergoes cyclization to form 1-pyrroline-5-carboxylate. The protein is Gamma-glutamyl phosphate reductase of Leptospira biflexa serovar Patoc (strain Patoc 1 / ATCC 23582 / Paris).